We begin with the raw amino-acid sequence, 295 residues long: Nucleotide-binding protein LSL_1171 (295 aa).

Position 13–20 (13–20) interacts with ATP; that stretch reads GMSGAGKT. 63–66 is a GTP binding site; the sequence is DLRS.

The protein belongs to the RapZ-like family.

Functionally, displays ATPase and GTPase activities. The chain is Nucleotide-binding protein LSL_1171 from Ligilactobacillus salivarius (strain UCC118) (Lactobacillus salivarius).